Reading from the N-terminus, the 308-residue chain is MLRVIVLGAAAGGGVPQWNCGCPVCRAAFDDPRLARTQASLAISADNAHWFLINASPDLRQQIIATPQLHPRAGALRHSPIAGVILTNGEVDAVAGLLSMREGAPFSIYAHDKVLAILRANSIFNVLNESIVARRPVATDQPFEPLLPDGTPSGLEITAFEVPGKGAWYLEGRTHPGGDSQSGDTLGLTITDKSTGQSLHVLTACARVTDDLKARLAGAPLLLFDGTVWRDDELITAGLGTKTGQAMGHIAMAGDDGAIAALADLDIGQKLFVHINNSNPALLAHSAERGQLETAGWQIPADGTEVTL.

This sequence belongs to the PqqB family.

It functions in the pathway cofactor biosynthesis; pyrroloquinoline quinone biosynthesis. Its function is as follows. May be involved in the transport of PQQ or its precursor to the periplasm. This is Coenzyme PQQ synthesis protein B from Rhodopseudomonas palustris (strain TIE-1).